The following is a 250-amino-acid chain: Probable replication-associated protein repA2 (250 aa).

This sequence belongs to the IncFII RepA family.

In terms of biological role, this protein is essential for plasmid replication; it is involved in copy control functions. In Buchnera aphidicola subsp. Acyrthosiphon pisum (strain APS) (Acyrthosiphon pisum symbiotic bacterium), this protein is Probable replication-associated protein repA2 (repA2).